The primary structure comprises 430 residues: UPF0597 protein BDI_1130 (430 aa).

The protein belongs to the UPF0597 family.

The chain is UPF0597 protein BDI_1130 from Parabacteroides distasonis (strain ATCC 8503 / DSM 20701 / CIP 104284 / JCM 5825 / NCTC 11152).